The chain runs to 144 residues: PE family protein PE9 (144 aa).

One can recognise a PE domain in the interval 1-87; it reads MSYMIATPAA…RTLTGGCGVF (87 aa). The tract at residues 98–124 is disordered; it reads AAEHRAAGAGRRQRRRRSGDGQWRLRQ.

This sequence belongs to the mycobacterial PE family. As to quaternary structure, forms a complex with PE10. The complex interacts with human TLR4.

The protein localises to the secreted. It localises to the cell wall. It is found in the cell surface. Its function is as follows. Together with PE10, induces macrophage apoptosis through human Toll-like receptor 4 (TLR4) signaling pathway. Interaction with TLR4 leads to increased levels of phospho-IRF-3, increase in the transcript levels of IFN-beta and pro-apoptotic genes, up-regulation of IL-10, down-regulation of IL-1b and enhanced levels of macrophage apoptosis. In Mycobacterium tuberculosis (strain ATCC 25618 / H37Rv), this protein is PE family protein PE9.